The primary structure comprises 730 residues: Catalase-peroxidase (730 aa).

The segment at residues Trp92–Tyr225 is a cross-link (tryptophyl-tyrosyl-methioninium (Trp-Tyr) (with M-251)). The Proton acceptor role is filled by His93. The segment at residues Tyr225–Met251 is a cross-link (tryptophyl-tyrosyl-methioninium (Tyr-Met) (with W-92)). A heme b-binding site is contributed by His266.

This sequence belongs to the peroxidase family. Peroxidase/catalase subfamily. In terms of assembly, homodimer or homotetramer. Requires heme b as cofactor. In terms of processing, formation of the three residue Trp-Tyr-Met cross-link is important for the catalase, but not the peroxidase activity of the enzyme.

It is found in the cytoplasm. It catalyses the reaction H2O2 + AH2 = A + 2 H2O. The catalysed reaction is 2 H2O2 = O2 + 2 H2O. Bifunctional enzyme with both catalase and broad-spectrum peroxidase activity. The protein is Catalase-peroxidase of Blumeria hordei (Barley powdery mildew).